Reading from the N-terminus, the 643-residue chain is Mitochondrial Rho GTPase 2 (643 aa).

At 1-611 the chain is on the cytoplasmic side; that stretch reads MMLGGKSSAG…SGRRSRNIRQ (611 aa). In terms of domain architecture, Miro 1 spans 12–179; that stretch reads RTSLRVAVAG…FYFASKAVLH (168 aa). 2 consecutive EF-hand domains span residues 195-230 and 315-350; these read RLRRAVQRIFNLCDHDLDGALNDAELNDFQVNCFGA and EAMDFLSGIFQLYDLDNDGALQPAELDDLFQTAPDS. Ca(2+) is bound by residues Asp-208, Asp-210, Asp-212, Glu-219, Asp-328, Asp-330, Asp-332, and Glu-339. One can recognise a Miro 2 domain in the interval 423–592; sequence RNVFQCFVFG…FSRIVSTAEN (170 aa). A helical membrane pass occupies residues 612–632; sequence LVNSSLLFVSVGTAVGFAGLA. Over 633–643 the chain is Mitochondrial intermembrane; sequence AYRAYSARKNA.

It belongs to the mitochondrial Rho GTPase family. As to expression, expressed roots, rosette and cauline leaves, stems, flowers and siliques.

It localises to the mitochondrion outer membrane. Its activity is regulated as follows. Activated by calcium. In terms of biological role, calcium-binding mitochondrial GTPase involved in calcium signaling during salt stress response. May play a role in the progression of embryonic cell division, development of haploid male and female gametes, and pollen tube growth. This is Mitochondrial Rho GTPase 2 from Arabidopsis thaliana (Mouse-ear cress).